Reading from the N-terminus, the 251-residue chain is MLTKRIIPCLDVKDGKTVKGVNFLNLRDAGDPVELGALYSQQGADELVFLDITATLEKRGTLVELVKRVAQHINIPFTIGGGIGSIEDVSACLNAGADKVSVNSSAIKNPALIDQLSKEFGNQCIVVAIDTRNVGGMNLVHSHGGTKPTDLDTIAWAKEMQERGAGELLLTSMDKDGTKAGFANELTAYISTHVSIPIIASGGAGTMEHFTDVFTLGKADAALAASIFHFKEIAIPELKSYLSGKGIHMRK.

Active-site residues include Asp11 and Asp130.

This sequence belongs to the HisA/HisF family. In terms of assembly, heterodimer of HisH and HisF.

Its subcellular location is the cytoplasm. The enzyme catalyses 5-[(5-phospho-1-deoxy-D-ribulos-1-ylimino)methylamino]-1-(5-phospho-beta-D-ribosyl)imidazole-4-carboxamide + L-glutamine = D-erythro-1-(imidazol-4-yl)glycerol 3-phosphate + 5-amino-1-(5-phospho-beta-D-ribosyl)imidazole-4-carboxamide + L-glutamate + H(+). The protein operates within amino-acid biosynthesis; L-histidine biosynthesis; L-histidine from 5-phospho-alpha-D-ribose 1-diphosphate: step 5/9. Functionally, IGPS catalyzes the conversion of PRFAR and glutamine to IGP, AICAR and glutamate. The HisF subunit catalyzes the cyclization activity that produces IGP and AICAR from PRFAR using the ammonia provided by the HisH subunit. In Cytophaga hutchinsonii (strain ATCC 33406 / DSM 1761 / CIP 103989 / NBRC 15051 / NCIMB 9469 / D465), this protein is Imidazole glycerol phosphate synthase subunit HisF.